The chain runs to 154 residues: MSEEKLKKKSFEIQRIYIRDASFEAPNTPNIFHKKWDPEIKFNLSTVSKKLKPNIFETNLQVRVIVKSEENLVFLCDVHQVGIFFISCLDEQELKHCLGSYCPNILFPYARTCISSLVSYGSFPQLNLSPIDFDDIFCKNLKSKRNNFYQKENI.

This sequence belongs to the SecB family. Homotetramer, a dimer of dimers. One homotetramer interacts with 1 SecA dimer.

The protein resides in the cytoplasm. Its function is as follows. One of the proteins required for the normal export of preproteins out of the cell cytoplasm. It is a molecular chaperone that binds to a subset of precursor proteins, maintaining them in a translocation-competent state. It also specifically binds to its receptor SecA. The sequence is that of Protein-export protein SecB from Buchnera aphidicola subsp. Schizaphis graminum (strain Sg).